The sequence spans 217 residues: Deoxyribose-phosphate aldolase 1 (217 aa).

D89 (proton donor/acceptor) is an active-site residue. K151 serves as the catalytic Schiff-base intermediate with acetaldehyde. K180 functions as the Proton donor/acceptor in the catalytic mechanism.

It belongs to the DeoC/FbaB aldolase family. DeoC type 1 subfamily.

It is found in the cytoplasm. The enzyme catalyses 2-deoxy-D-ribose 5-phosphate = D-glyceraldehyde 3-phosphate + acetaldehyde. The protein operates within carbohydrate degradation; 2-deoxy-D-ribose 1-phosphate degradation; D-glyceraldehyde 3-phosphate and acetaldehyde from 2-deoxy-alpha-D-ribose 1-phosphate: step 2/2. In terms of biological role, catalyzes a reversible aldol reaction between acetaldehyde and D-glyceraldehyde 3-phosphate to generate 2-deoxy-D-ribose 5-phosphate. This is Deoxyribose-phosphate aldolase 1 from Cutibacterium acnes (strain DSM 16379 / KPA171202) (Propionibacterium acnes).